Here is a 568-residue protein sequence, read N- to C-terminus: Vacuolar protein 8 (568 aa).

The N-myristoyl glycine moiety is linked to residue glycine 2. S-palmitoyl cysteine attachment occurs at residues cysteine 4, cysteine 5, and cysteine 7. ARM repeat units follow at residues 37-74 (DKDNYDFYSGGPLKALTTLVYSDNLNLQRSAALAFAEI), 75-114 (TEKYVRPVDREVLEPILILLQSHDPQIQIAACAALGNLAV), 116-155 (NENKILIVEMGGLEPLIEQMKSNNVEVQCNAVGCITNLAT), 157-196 (DDNKAKIAHSGALVPLTKLAKSKNIRVQRNATGALLNMTH), 198-237 (GENRKELVDAGAVPVLVSLLSSSDADVQYYCTTALSNIAV), 241-280 (NRRKLSQTEPRLVSKLVVLTDSPSARVKCQATLALRNLAS), 282-321 (TGYQLEIVRAGGLSHLVKLIQCNSMPLVLASVACIRNISI), 323-363 (PLNE…NLAA), and 407-446 (DNSKLELLDANILEALIPMTFSTNQEVAGNAAAALANLCS).

Belongs to the beta-catenin family.

It localises to the vacuole membrane. Its function is as follows. Functions in both vacuole inheritance and protein targeting from the cytoplasm to vacuole. This is Vacuolar protein 8 (VAC8) from Eremothecium gossypii (strain ATCC 10895 / CBS 109.51 / FGSC 9923 / NRRL Y-1056) (Yeast).